We begin with the raw amino-acid sequence, 34 residues long: AVERPRQDGQVHEPPGRERKAGCKNFFWKTFTSC.

Residues 1 to 20 (AVERPRQDGQVHEPPGRERK) are disordered. C23 and C34 are oxidised to a cystine.

It belongs to the somatostatin family.

It is found in the secreted. Its function is as follows. Somatostatin inhibits the release of somatotropin. The sequence is that of Somatostatin (sst) from Myxine glutinosa (Atlantic hagfish).